The sequence spans 545 residues: Chaperonin GroEL 1 (545 aa).

Residues 30-33 (TLGP), Lys-51, 87-91 (DGTTT), Gly-415, and Asp-495 contribute to the ATP site.

This sequence belongs to the chaperonin (HSP60) family. Forms a cylinder of 14 subunits composed of two heptameric rings stacked back-to-back. Interacts with the co-chaperonin GroES.

The protein resides in the cytoplasm. It catalyses the reaction ATP + H2O + a folded polypeptide = ADP + phosphate + an unfolded polypeptide.. Together with its co-chaperonin GroES, plays an essential role in assisting protein folding. The GroEL-GroES system forms a nano-cage that allows encapsulation of the non-native substrate proteins and provides a physical environment optimized to promote and accelerate protein folding. The protein is Chaperonin GroEL 1 of Rhizobium meliloti (strain 1021) (Ensifer meliloti).